The following is a 423-amino-acid chain: Histidine--tRNA ligase (423 aa).

It belongs to the class-II aminoacyl-tRNA synthetase family. As to quaternary structure, homodimer.

It is found in the cytoplasm. The enzyme catalyses tRNA(His) + L-histidine + ATP = L-histidyl-tRNA(His) + AMP + diphosphate + H(+). This chain is Histidine--tRNA ligase (hisS), found in Haemophilus influenzae (strain ATCC 51907 / DSM 11121 / KW20 / Rd).